A 37-amino-acid polypeptide reads, in one-letter code: Potassium channel toxin alpha-KTx 15.1 (37 aa).

Q1 carries the post-translational modification Pyrrolidone carboxylic acid. 3 disulfide bridges follow: C8/C28, C13/C33, and C17/C35.

The protein belongs to the short scorpion toxin superfamily. Potassium channel inhibitor family. Alpha-KTx 15 subfamily. Expressed by the venom gland.

It is found in the secreted. Its function is as follows. Blocker of voltage-gated potassium channels (600 nM of the toxin induces a block of 25% of hERG currents). May also inhibit Kv4/KCND when coexpressed with DPP6 or DPP10. In adult rat brain, it blocks the transient potassium channels in cerebellum granular cells. Blocks potassium channels by a simple 'plugging mechanism', in which a single toxin molecule finds a specific receptor site in the external vestibule of the potassium channel and thereby occludes the outer entry to the potassium conducting pore. This Androctonus australis (Sahara scorpion) protein is Potassium channel toxin alpha-KTx 15.1.